The following is an 896-amino-acid chain: Protein translocase subunit SecA (896 aa).

ATP-binding positions include Q87, G105–T109, and D507. Residues E853–P879 are disordered. Residues T866 to R876 are compositionally biased toward basic and acidic residues. Positions 880, 882, 891, and 892 each coordinate Zn(2+).

Belongs to the SecA family. As to quaternary structure, monomer and homodimer. Part of the essential Sec protein translocation apparatus which comprises SecA, SecYEG and auxiliary proteins SecDF-YajC and YidC. It depends on Zn(2+) as a cofactor.

Its subcellular location is the cell inner membrane. It is found in the cytoplasm. It catalyses the reaction ATP + H2O + cellular proteinSide 1 = ADP + phosphate + cellular proteinSide 2.. Part of the Sec protein translocase complex. Interacts with the SecYEG preprotein conducting channel. Has a central role in coupling the hydrolysis of ATP to the transfer of proteins into and across the cell membrane, serving both as a receptor for the preprotein-SecB complex and as an ATP-driven molecular motor driving the stepwise translocation of polypeptide chains across the membrane. The polypeptide is Protein translocase subunit SecA (Legionella pneumophila subsp. pneumophila (strain Philadelphia 1 / ATCC 33152 / DSM 7513)).